The following is a 2057-amino-acid chain: MLRLVVQSAKIDPPLAPLPRPCMSIDFRDIKKRTRVVEGNDPVWNETLIWHLWNRPLENDSFLQVTLQDMGSQKKERFIGLATVLLKPLLKQPSEVLFVKDLTLLNHSMKPTDCTVTLQVAHMSNQDIEKTGAEDHLGITAREAASQKLMVPGSTAHRALSSKPQHFQVRVKVFEARQLMGNNIKPVVKVSIAGQQHQTRIKMGNNPFFNEIFFQNFHEVPAKFFDETILIQVVNSSAMRYKAEIGRFQTDIGFIYHSPGHTLLRKWLGLCQPNNPGSGVTGYLKVTIYALGVGDQALIDQKLLYGTDDTDIQIFKSAVVPINMAYLQLFIYCAEDLHLKKHQSVNPQLEVELIGEKLRTHMQTQTDNPIWNQILTFRIQLPCLSSYIKFRVLDCRKKDCPDEIGTASLSLNQISSTGEEIEGVYSGFLPCFGPSFLTLHGGKKAPFRIQEEGACIPDSVRDGLAYRGRVFLELITQIKSYQDSTIKDLSHEVTRIEKHQNRQKYGLCVIFLSCTMMPNFKELIHFEVSIGHYGNKMDLNYKPLVSSTPYSPVIYDGNIYHYVPWYNTKPVVAVTSNWEDVSFRMNCLNLLHFTRDRLKANLDTLKSTRNPKDPALLYQWEKLLRELAEDCKRPLPCMTYQPKATSLDRKRWQLRSLLLQELAQKAKQAKPKDMVATAEDWLYRLNTVLPEPQMGLPDVMIWLVAKEQRVAYAQVPAHSVLFSPAGALHSGRLCGKIQTLFLQYPEGEGQKDVLPAHLRVCMWLGNVTDSKDLQLLRQGDTAVYAEMYENQAKYKDQWGQQGLYHCPNFSDVMGNKTLPMTDFQPPLGWHWQDSWTVEPQRRLLLDIDINKSQVLEEVYENQGRDTRGAWGPAAIPNTDVNGQPMEARENVKCPQGWHFKKDWVVELNHAVDSKGWEYGVGIPPSGLPQVWSPVEKTYHSCRRRRWARVRFRNHGELSHEQETLSFLQLGLAKGEEEGWEYDTFGSKFHLNPQPQSRFRRRCWRRRLAPNKDKGIAPIFLLEGSLAMDLKYHAGKEEDSKTWPWGLDRQFRDPQRQDTRPPNLPFIYCTFNKPHYYQLFCYIYQARNLVSNQILTFQGPFIRVVFLNHSQCTQTLRSSAGPTWAQTLIFQHLLLYENPQDTKESPPLVVLELWQRDFWGKESLWGRSVWPPMVWLDLQDRILPPMRWHPLVKELGKEEGEILASCELILQTEKLGEKQLPILSVPWKNGAYTLPKSIQPTIKRMAIEILAWGLRNMKKASSPQLLVEFGEESLRTEPIRDFQTNPNFPESESVLVLTVLMPTEEAYALPLVVKVVDNWAFGQQTVTGQANIDFLQPYFCDPWAQDYMHPKLPTLSEKKHQDFLGYLYRKFWFKSSKAEDEYEHEVDWWSKLFWATDEHKSLKYKYKDYHTLKVYECELEAVPAFQGLQDFCQTFKLYQEQPKLDSPVVGEFKGLFRIYPFPENPEAPKPPLQFLVWPEREDFPQPCLVRVYMVRAINLQPQDYNGLCDPYVILKLGKTELGNRDMYQPNTLDPIFGMMFELTCNIPLEKDLEIQLYDFDLFSPDDKIGTTVIDLENRLLSGFGAHCGLSKSYCQSGPFRWRDQMPPSYLLERYAKRKGLPPPLFSPEEDAVFYNGKKFKLQSFEPKTPTVHGLGPKKERLALYLLHTQGLVPEHVETRTLYSHSQPGIDQGKVQMWVDIFPKKLGPPGPQVNINPRKPKRYELRCIIWKTANVDLVDDNLSREKTSDIYIKGWLYGLEKDMQKTDIHYHSLTGEADFNWRFIFTMDYLAAERTCVQSQKDYIWSLDATSMKFPARLIIQVWDNDIFSPDDFLGVLELDLSDMPLPARHAKQCSIRMMDADPKWPYFIQYKHFSLFKKKTVTGWWPCQVLDGGKWRLSGKVKMSLEILSEKEALIKPAGRGQSEPNQYPTLHPPLRTNTSFTWLRSPVQNFCYIFWKRYRFKLIAFMVISIIALMLFNFIYSAPHYLAMSWIKPQLQLYPPIKIFNIINSLNTSNASSSILPTQDPNLKPTIDHEWKLHPGPTNHLSDIFPELPAPGD.

C2 domains are found at residues 1 to 99 (MLRL…VLFV), 152 to 265 (PGST…TLLR), 308 to 425 (DDTD…EGVY), 1057 to 1188 (DTRP…MRWH), 1213 to 1346 (KLGE…AQDY), 1467 to 1587 (PKPP…AHCG), and 1705 to 1853 (GPPG…KQCS). 10 residues coordinate Ca(2+): Asp1502, Asp1508, Asp1557, Phe1558, Asp1559, Ser1562, Asp1565, Asp1824, Ser1827, and Asp1830. A helical transmembrane segment spans residues 1962–1982 (LIAFMVISIIALMLFNFIYSA).

This sequence belongs to the ferlin family. In terms of assembly, interacts (via second C2 domain) with EHD1 and EHD2. The cofactor is Ca(2+).

It localises to the cell membrane. Its subcellular location is the membrane. Its function is as follows. Plays a role in myoblast fusion; probable mediator of endocytic recycling for membrane trafficking events during myotube formation. In Homo sapiens (Human), this protein is Fer-1-like protein 5 (FER1L5).